We begin with the raw amino-acid sequence, 117 residues long: uncharacterized protein (117 aa).

The first 18 residues, 1-18 (MKFFWVSSLLGLLGLSTA), serve as a signal peptide directing secretion. N-linked (GlcNAc...) asparagine glycosylation occurs at Asn86.

This is an uncharacterized protein from Schizosaccharomyces pombe (strain 972 / ATCC 24843) (Fission yeast).